Consider the following 102-residue polypeptide: Large ribosomal subunit protein uL24 (102 aa).

Belongs to the universal ribosomal protein uL24 family. In terms of assembly, part of the 50S ribosomal subunit.

In terms of biological role, one of two assembly initiator proteins, it binds directly to the 5'-end of the 23S rRNA, where it nucleates assembly of the 50S subunit. One of the proteins that surrounds the polypeptide exit tunnel on the outside of the subunit. This Agrobacterium fabrum (strain C58 / ATCC 33970) (Agrobacterium tumefaciens (strain C58)) protein is Large ribosomal subunit protein uL24.